The primary structure comprises 24 residues: U1-plectoxin-Pt1e (24 aa).

A disulfide bond links C4 and C18.

Belongs to the neurotoxin 02 (plectoxin) family. 02 (plectoxin) subfamily. In terms of processing, contains 5 disulfide bonds. Expressed by the venom gland.

The protein localises to the secreted. Potent toxin that may paralyze and/or kill insect pests such as H.virescens (lepidoptera), S.exigua (beet armyworm) and M.sexta (tobacco hornworm). This chain is U1-plectoxin-Pt1e, found in Plectreurys tristis (Spider).